A 359-amino-acid polypeptide reads, in one-letter code: 4-hydroxy-3-methylbut-2-en-1-yl diphosphate synthase (flavodoxin) (359 aa).

4 residues coordinate [4Fe-4S] cluster: cysteine 263, cysteine 266, cysteine 298, and glutamate 305.

Belongs to the IspG family. It depends on [4Fe-4S] cluster as a cofactor.

The enzyme catalyses (2E)-4-hydroxy-3-methylbut-2-enyl diphosphate + oxidized [flavodoxin] + H2O + 2 H(+) = 2-C-methyl-D-erythritol 2,4-cyclic diphosphate + reduced [flavodoxin]. It functions in the pathway isoprenoid biosynthesis; isopentenyl diphosphate biosynthesis via DXP pathway; isopentenyl diphosphate from 1-deoxy-D-xylulose 5-phosphate: step 5/6. Its function is as follows. Converts 2C-methyl-D-erythritol 2,4-cyclodiphosphate (ME-2,4cPP) into 1-hydroxy-2-methyl-2-(E)-butenyl 4-diphosphate. This chain is 4-hydroxy-3-methylbut-2-en-1-yl diphosphate synthase (flavodoxin), found in Wolinella succinogenes (strain ATCC 29543 / DSM 1740 / CCUG 13145 / JCM 31913 / LMG 7466 / NCTC 11488 / FDC 602W) (Vibrio succinogenes).